A 424-amino-acid polypeptide reads, in one-letter code: MNPDNTIAVITETIPIGMQFDKVYLSTFNMWREILSNTTKTLDISSFYWSLSDEVGTNFGTIILNEIVQLPKRGVRVRVAVNKSNKPLKDVERLQMAGVEVRYIDITNILGGVLHTKFWISDNTHIYLGSANMDWRSLTQVKELGIAIFNNRNLAADLTQIFEVYWYLGVNNLPYNWKNFYPSYYNTDHPLSINVSGVPHSVFIASAPQQLCTMERTNDLTALLSCIRNASKFVYVSVMNFIPIIYSKAGKILFWPYIEDELRRSAIDRQVSVKLLISCWQRSSFIMRNFLRSIAMLKSKNIDIEVKLFIVPDADPPIPYSRVNHAKYMVTDKTAYIGTSNWTGNYFTDTCGASINITPDDGLGLRQQLEDIFMRDWNSKYSYELYDTSPTKRCKLLKNMKQCTNDIYCDEIQPEKEIPEYSLE.

PLD phosphodiesterase domains follow at residues 110 to 137 (LGGV…DWRS) and 320 to 346 (YSRV…TGNY).

This sequence belongs to the orthopoxvirus OPG042 family.

It localises to the virion. In terms of biological role, DNA nicking enzyme that cleaves extruded cruciform DNA at its tip. Probably nicks viral hairpins. This Homo sapiens (Human) protein is Virion nicking-joining enzyme (OPG042).